We begin with the raw amino-acid sequence, 220 residues long: Claudin-22 (220 aa).

Over 1-10 (MALVFRTVAQ) the chain is Cytoplasmic. Residues 11–30 (LAGVSLSLLGWVLSCLTNYL) traverse the membrane as a helical segment. The Extracellular portion of the chain corresponds to 31–81 (PHWKNLNLDLNEMENWTMGLWQTCVIQEEVGMQCKDFDSFLALPAELRVSR). The helical transmembrane segment at 82-102 (ILMFLSNGLGFLGLLVSGFGL) threads the bilayer. The Cytoplasmic portion of the chain corresponds to 103 to 117 (DCLRIGESQRDLKRR). The chain crosses the membrane as a helical span at residues 118–138 (LLILGGILSWASGVTALVPVS). Over 139–164 (WVAHKTVQEFWDENVPDFVPRWEFGE) the chain is Extracellular. A helical membrane pass occupies residues 165–185 (ALFLGWFAGLSLLLGGCLLHC). Residues 186 to 220 (AACSSHAPLASGHYAVAQTQDHHQELETRNTNLKH) are Cytoplasmic-facing.

It belongs to the claudin family.

The protein resides in the cell junction. It localises to the tight junction. The protein localises to the cell membrane. Functionally, plays a major role in tight junction-specific obliteration of the intercellular space, through calcium-independent cell-adhesion activity. The protein is Claudin-22 (CLDN22) of Homo sapiens (Human).